Reading from the N-terminus, the 401-residue chain is MEGFSRDLLCGIGKGGDGPRGEVRPRVDMEAEEVELNLGLSLGGRFGLDRRGEKLARSSSVAAILAAPTEPSAPPSGLFRTSSLPTVAAAEAAKKQGVDELNCRRPSGGAEAEPAAARLPASGSPSSGSSDGEGRRLEVNMTDTLMRTSSLPAGIEDEWRKRKEAQSLKRLEVKRKRIERRNSLTSNISKEAVGQILEEMNAGAEKVESCDDVATGNKKTGGNVNHSSDRNRCTGLPPVHRATYTQQRGSLSGIPTKHIPAMKGSADAEEHNVPSAATEHRNGAAIATPPFSALAVRAVALASRGEQLRATGRVAARAKSMGDVERIMMQEMPCVCTKGLPNGKRVEGFLYKYRKGEEVRIVCVCHGSFLTPAEFVKHAGGGDVANPLRHIVVNPIPPSLY.

2 disordered regions span residues 95–135 (KQGV…GEGR) and 215–238 (TGNKKTGGNVNHSSDRNRCTGLPP). The segment covering 105-130 (RPSGGAEAEPAAARLPASGSPSSGSS) has biased composition (low complexity). The span at 217–226 (NKKTGGNVNH) shows a compositional bias: polar residues.

The protein belongs to the Ninja family. In terms of assembly, interacts with BZIP46, TPR3 and PUB70.

The protein localises to the nucleus. In terms of biological role, acts as a negative regulator of abscisic acid (ABA) signaling and drought tolerance. Mediates deactivation and degradation of BZIP46, a positive regulator of ABA signaling and drought stress tolerance. Represses BZIP46 activity via interaction with the TPR3-HDAC1 corepressor complex and down-regulation of the histone acetylation level at BZIP46 target genes. Promotes BZIP46 degradation via interaction with the U-box type ubiquitin E3 ligase PUB70. In Oryza sativa subsp. japonica (Rice), this protein is Ninja-family protein MODD.